The chain runs to 398 residues: Tyrosine--tRNA ligase (398 aa).

The 'HIGH' region signature appears at 48–57 (PTGADIHLGH). Residues 235-239 (KMSKS) carry the 'KMSKS' region motif. An ATP-binding site is contributed by K238. The S4 RNA-binding domain occupies 334 to 398 (VKLAYLLGAT…GKNKFVRLVL (65 aa)).

It belongs to the class-I aminoacyl-tRNA synthetase family. TyrS type 2 subfamily. As to quaternary structure, homodimer.

Its subcellular location is the cytoplasm. It catalyses the reaction tRNA(Tyr) + L-tyrosine + ATP = L-tyrosyl-tRNA(Tyr) + AMP + diphosphate + H(+). Functionally, catalyzes the attachment of tyrosine to tRNA(Tyr) in a two-step reaction: tyrosine is first activated by ATP to form Tyr-AMP and then transferred to the acceptor end of tRNA(Tyr). In Trichormus variabilis (strain ATCC 29413 / PCC 7937) (Anabaena variabilis), this protein is Tyrosine--tRNA ligase.